The sequence spans 218 residues: Thiamine-phosphate synthase (218 aa).

Residues 46–50 and Asp-83 each bind 4-amino-2-methyl-5-(diphosphooxymethyl)pyrimidine; that span reads QFRDK. Residues Asp-84 and Asp-103 each contribute to the Mg(2+) site. Residue Ser-122 coordinates 4-amino-2-methyl-5-(diphosphooxymethyl)pyrimidine. 149 to 151 is a binding site for 2-[(2R,5Z)-2-carboxy-4-methylthiazol-5(2H)-ylidene]ethyl phosphate; that stretch reads TNS. A 4-amino-2-methyl-5-(diphosphooxymethyl)pyrimidine-binding site is contributed by Lys-152. 2-[(2R,5Z)-2-carboxy-4-methylthiazol-5(2H)-ylidene]ethyl phosphate contacts are provided by residues Gly-181 and 201–202; that span reads IT.

The protein belongs to the thiamine-phosphate synthase family. Mg(2+) serves as cofactor.

The catalysed reaction is 2-[(2R,5Z)-2-carboxy-4-methylthiazol-5(2H)-ylidene]ethyl phosphate + 4-amino-2-methyl-5-(diphosphooxymethyl)pyrimidine + 2 H(+) = thiamine phosphate + CO2 + diphosphate. The enzyme catalyses 2-(2-carboxy-4-methylthiazol-5-yl)ethyl phosphate + 4-amino-2-methyl-5-(diphosphooxymethyl)pyrimidine + 2 H(+) = thiamine phosphate + CO2 + diphosphate. It catalyses the reaction 4-methyl-5-(2-phosphooxyethyl)-thiazole + 4-amino-2-methyl-5-(diphosphooxymethyl)pyrimidine + H(+) = thiamine phosphate + diphosphate. Its pathway is cofactor biosynthesis; thiamine diphosphate biosynthesis; thiamine phosphate from 4-amino-2-methyl-5-diphosphomethylpyrimidine and 4-methyl-5-(2-phosphoethyl)-thiazole: step 1/1. In terms of biological role, condenses 4-methyl-5-(beta-hydroxyethyl)thiazole monophosphate (THZ-P) and 2-methyl-4-amino-5-hydroxymethyl pyrimidine pyrophosphate (HMP-PP) to form thiamine monophosphate (TMP). In Actinobacillus pleuropneumoniae serotype 7 (strain AP76), this protein is Thiamine-phosphate synthase.